A 734-amino-acid polypeptide reads, in one-letter code: MSGFDDPGIFYSDSFGGDNAADEGQARKSQLQRRFKEFLRQYRVGTDRTGFTFKYRDELKRHYNLGEYWIEVEMEDLASFDEELADYLYKQPAEHLQLLEEAAKEVADEVTRPRPAGDEVLQDIQVMLKSDASPSSIRSLKSDTMSHLVKIPGIVIAASGVRAKATRISIQCRSCHSTLTNIAMRPGLDGYALPRKCNTDQAGRPKCPLDPYFIMPDKCKCVDFQTLKLQELPDAVPHGEMPRHMQLYCDRYLCDKVVPGNRVTIMGIYSIKKFGLTSNRGRDRVGVGIRSAYIRVLGIQVDTDGSGRTFAGAMTPQEEEEFRRLAALPNIYELISKSIAPSIFGGTDMKKAIACLLFGGSRKRLPDGLTRRGDINLLMLGDPGTAKSQLLKFVEKCSPIGVYTSGKGSSAAGLTASVMRDPSSRNFIMEGGAMVLADGGVVCIDEFDKMREDDRVAIHEAMEQQTISIAKAGITTTLNSRCSVLAAANSVFGRWDETKGEDNIDFMPTILSRFDMIFIVKDEHNEERDVMLAKHVITLHVSALTQAQAVEGEIDLAKLKKFIAYCRAKCGPRLSAEAAEKLKNRYIIMRSGARQHERDSDRRSSIPITVRQLEAIVRIAEALSKMKLQPFATEADVEEALRLFQVSTLDAALSGTLSGVEGFTSQEDQELLSRIEKQLKRRFAIGSQVSEHSIIQDFTKQKYPEHAIHKVLQLMLRRGEIQHRMQRKVLYRLK.

The residue at position 2 (Ser-2) is an N-acetylserine. The region spanning Ile-331–Ile-537 is the MCM domain. Position 371 (Arg-371) interacts with ADP. Lys-392 and Lys-396 each carry N6-acetyllysine. An Arginine finger motif is present at residues Ser-512–Asp-515. Ser-605 bears the Phosphoserine mark.

The protein belongs to the MCM family. Component of the MCM2-7 complex. The complex forms a toroidal hexameric ring with the proposed subunit order MCM2-MCM6-MCM4-MCM7-MCM3-MCM5. Component of the CMG helicase complex, a hexameric ring of related MCM2-7 subunits stabilized by CDC45 and the tetrameric GINS complex. Interacts with ANKRD17. Interacts with MCMBP. Interacts with TONSL; the interaction is direct.

The protein localises to the nucleus. Its subcellular location is the chromosome. It is found in the cytoplasm. The protein resides in the cytosol. The catalysed reaction is ATP + H2O = ADP + phosphate + H(+). Its function is as follows. Acts as a component of the MCM2-7 complex (MCM complex) which is the replicative helicase essential for 'once per cell cycle' DNA replication initiation and elongation in eukaryotic cells. Core component of CDC45-MCM-GINS (CMG) helicase, the molecular machine that unwinds template DNA during replication, and around which the replisome is built. The active ATPase sites in the MCM2-7 ring are formed through the interaction surfaces of two neighboring subunits such that a critical structure of a conserved arginine finger motif is provided in trans relative to the ATP-binding site of the Walker A box of the adjacent subunit. The six ATPase active sites, however, are likely to contribute differentially to the complex helicase activity. In Bos taurus (Bovine), this protein is DNA replication licensing factor MCM5.